The following is a 158-amino-acid chain: Anaerobic ribonucleoside-triphosphate reductase-activating protein (158 aa).

Residues cysteine 26, cysteine 30, and cysteine 33 each contribute to the [4Fe-4S] cluster site. S-adenosyl-L-methionine-binding positions include glycine 32–tyrosine 34 and glycine 74.

The protein belongs to the organic radical-activating enzymes family. As to quaternary structure, forms a tetramer composed of two NrdD and two NrdG subunits. [4Fe-4S] cluster serves as cofactor.

It is found in the cytoplasm. It carries out the reaction glycyl-[protein] + reduced [flavodoxin] + S-adenosyl-L-methionine = glycin-2-yl radical-[protein] + semiquinone [flavodoxin] + 5'-deoxyadenosine + L-methionine + H(+). Its function is as follows. Activation of anaerobic ribonucleoside-triphosphate reductase under anaerobic conditions by generation of an organic free radical, using S-adenosylmethionine and reduced flavodoxin as cosubstrates to produce 5'-deoxy-adenosine. This is Anaerobic ribonucleoside-triphosphate reductase-activating protein (nrdG) from Pasteurella multocida (strain Pm70).